We begin with the raw amino-acid sequence, 371 residues long: UDP-N-acetylglucosamine--N-acetylmuramyl-(pentapeptide) pyrophosphoryl-undecaprenol N-acetylglucosamine transferase (371 aa).

UDP-N-acetyl-alpha-D-glucosamine contacts are provided by residues 10 to 12, Asn-124, Arg-166, Ser-196, and Gln-301; that span reads TGG.

Belongs to the glycosyltransferase 28 family. MurG subfamily.

Its subcellular location is the cell membrane. The enzyme catalyses di-trans,octa-cis-undecaprenyl diphospho-N-acetyl-alpha-D-muramoyl-L-alanyl-D-glutamyl-meso-2,6-diaminopimeloyl-D-alanyl-D-alanine + UDP-N-acetyl-alpha-D-glucosamine = di-trans,octa-cis-undecaprenyl diphospho-[N-acetyl-alpha-D-glucosaminyl-(1-&gt;4)]-N-acetyl-alpha-D-muramoyl-L-alanyl-D-glutamyl-meso-2,6-diaminopimeloyl-D-alanyl-D-alanine + UDP + H(+). The protein operates within cell wall biogenesis; peptidoglycan biosynthesis. Cell wall formation. Catalyzes the transfer of a GlcNAc subunit on undecaprenyl-pyrophosphoryl-MurNAc-pentapeptide (lipid intermediate I) to form undecaprenyl-pyrophosphoryl-MurNAc-(pentapeptide)GlcNAc (lipid intermediate II). The chain is UDP-N-acetylglucosamine--N-acetylmuramyl-(pentapeptide) pyrophosphoryl-undecaprenol N-acetylglucosamine transferase from Moorella thermoacetica (strain ATCC 39073 / JCM 9320).